The chain runs to 443 residues: Tol-Pal system protein TolB (443 aa).

A signal peptide spans 1-31 (MMIMTTRTFFSWFIVICAFWLTSFSSVPVHA). The disordered stretch occupies residues 422 to 443 (ERQLPTPNDASDPAWSPLLNIQ).

It belongs to the TolB family. In terms of assembly, the Tol-Pal system is composed of five core proteins: the inner membrane proteins TolA, TolQ and TolR, the periplasmic protein TolB and the outer membrane protein Pal. They form a network linking the inner and outer membranes and the peptidoglycan layer.

It is found in the periplasm. In terms of biological role, part of the Tol-Pal system, which plays a role in outer membrane invagination during cell division and is important for maintaining outer membrane integrity. The chain is Tol-Pal system protein TolB from Bartonella henselae (strain ATCC 49882 / DSM 28221 / CCUG 30454 / Houston 1) (Rochalimaea henselae).